Reading from the N-terminus, the 414-residue chain is Dihydroorotase (414 aa).

Histidine 56 and histidine 58 together coordinate Zn(2+). Residues 58 to 60 and asparagine 90 each bind substrate; that span reads HFR. Positions 138, 171, 219, and 280 each coordinate Zn(2+). Lysine 138 bears the N6-carboxylysine mark. Aspartate 280 is an active-site residue. Position 284 (histidine 284) interacts with substrate.

It belongs to the metallo-dependent hydrolases superfamily. DHOase family. Class I DHOase subfamily. It depends on Zn(2+) as a cofactor.

It carries out the reaction (S)-dihydroorotate + H2O = N-carbamoyl-L-aspartate + H(+). It participates in pyrimidine metabolism; UMP biosynthesis via de novo pathway; (S)-dihydroorotate from bicarbonate: step 3/3. Its function is as follows. Catalyzes the reversible cyclization of carbamoyl aspartate to dihydroorotate. The chain is Dihydroorotase from Thermoplasma acidophilum (strain ATCC 25905 / DSM 1728 / JCM 9062 / NBRC 15155 / AMRC-C165).